The primary structure comprises 234 residues: Prolactin-6A1 (234 aa).

The first 33 residues, 1 to 33 (MVKSWLRMSKKMEAGTLLMLLMSNILLWENVAS), serve as a signal peptide directing secretion. Asparagine 61 is a glycosylation site (N-linked (GlcNAc...) asparagine). Disulfide bonds link cysteine 93–cysteine 209 and cysteine 226–cysteine 234.

Belongs to the somatotropin/prolactin family.

It localises to the secreted. The sequence is that of Prolactin-6A1 (Prl6a1) from Rattus norvegicus (Rat).